Consider the following 423-residue polypeptide: Elongation factor 1-alpha (423 aa).

Residues 5-221 (KEHINVAFIG…DLLKPPEKLV (217 aa)) enclose the tr-type G domain. Residues 14–21 (GHVDHGKS) form a G1 region. Residue 14 to 21 (GHVDHGKS) participates in GTP binding. Ser21 is a Mg(2+) binding site. The segment at 70–74 (GVTID) is G2. The tract at residues 91-94 (DCPG) is G3. GTP contacts are provided by residues 91–95 (DCPGH) and 146–149 (NKMD). Residues 146–149 (NKMD) are G4. The tract at residues 185 to 187 (SAY) is G5.

It belongs to the TRAFAC class translation factor GTPase superfamily. Classic translation factor GTPase family. EF-Tu/EF-1A subfamily.

It localises to the cytoplasm. The enzyme catalyses GTP + H2O = GDP + phosphate + H(+). GTP hydrolase that promotes the GTP-dependent binding of aminoacyl-tRNA to the A-site of ribosomes during protein biosynthesis. This chain is Elongation factor 1-alpha, found in Archaeoglobus fulgidus (strain ATCC 49558 / DSM 4304 / JCM 9628 / NBRC 100126 / VC-16).